The following is a 376-amino-acid chain: Erythronate-4-phosphate dehydrogenase (376 aa).

Residues Ser45 and Thr67 each coordinate substrate. Asp147 is a binding site for NAD(+). Residue Arg209 is part of the active site. Asp233 serves as a coordination point for NAD(+). Residue Glu238 is part of the active site. The active-site Proton donor is the His255. Residue Gly258 coordinates NAD(+). Residue Tyr259 coordinates substrate.

The protein belongs to the D-isomer specific 2-hydroxyacid dehydrogenase family. PdxB subfamily. As to quaternary structure, homodimer.

The protein localises to the cytoplasm. The enzyme catalyses 4-phospho-D-erythronate + NAD(+) = (R)-3-hydroxy-2-oxo-4-phosphooxybutanoate + NADH + H(+). It functions in the pathway cofactor biosynthesis; pyridoxine 5'-phosphate biosynthesis; pyridoxine 5'-phosphate from D-erythrose 4-phosphate: step 2/5. Functionally, catalyzes the oxidation of erythronate-4-phosphate to 3-hydroxy-2-oxo-4-phosphonooxybutanoate. The protein is Erythronate-4-phosphate dehydrogenase of Shewanella baltica (strain OS223).